The primary structure comprises 194 residues: 7-methyl-GTP pyrophosphatase (194 aa).

Asp-70 (proton acceptor) is an active-site residue.

The protein belongs to the Maf family. YceF subfamily. The cofactor is a divalent metal cation.

It localises to the cytoplasm. The enzyme catalyses N(7)-methyl-GTP + H2O = N(7)-methyl-GMP + diphosphate + H(+). In terms of biological role, nucleoside triphosphate pyrophosphatase that hydrolyzes 7-methyl-GTP (m(7)GTP). May have a dual role in cell division arrest and in preventing the incorporation of modified nucleotides into cellular nucleic acids. In Vibrio vulnificus (strain CMCP6), this protein is 7-methyl-GTP pyrophosphatase.